The sequence spans 466 residues: Delta-1 crystallin (466 aa).

Ala-2 carries the blocked amino end (Ala) modification.

This sequence belongs to the lyase 1 family. Argininosuccinate lyase subfamily. Homotetramer. The N-terminus is blocked. As to expression, eye lens.

Delta crystallin, the principal crystallin in embryonic lens, is found only in birds and reptiles. This chain is Delta-1 crystallin (ASL1), found in Gallus gallus (Chicken).